A 178-amino-acid polypeptide reads, in one-letter code: Single-stranded DNA-binding protein 2 (178 aa).

In terms of domain architecture, SSB spans 6–111 (VNKVILVGNL…VVVSQSGTMQ (106 aa)). Residues 55–61 (WHRVVLY) mediate DNA binding. Positions 111–161 (QMLGGRNSAGSGQQQGGWGQPQQPAAPSHSGMPPQQHPANEPPMDFDDDIP) are disordered.

As to quaternary structure, homotetramer.

This chain is Single-stranded DNA-binding protein 2 (ssb2), found in Salmonella typhi.